The chain runs to 381 residues: Spindlin interactor and repressor of chromatin-binding protein (381 aa).

The interval 42–73 is disordered; that stretch reads RVTQQEKTPPPRPSPLEAGSDGCEEPKQQVSW. Lysine 48 participates in a covalent cross-link: Glycyl lysine isopeptide (Lys-Gly) (interchain with G-Cter in SUMO2). Phosphoserine occurs at positions 121 and 148. Disordered stretches follow at residues 144-264, 283-320, and 339-381; these read AEQP…EVRH, QLRG…LRGT, and LQDW…GNGV. Residues lysine 189 and lysine 220 each participate in a glycyl lysine isopeptide (Lys-Gly) (interchain with G-Cter in SUMO2) cross-link. Basic and acidic residues predominate over residues 218 to 228; the sequence is RWKEPPGEEPV. Residues serine 248 and serine 251 each carry the phosphoserine modification. Over residues 287–299 the composition is skewed to basic and acidic residues; it reads PDSKDSPKDREVA. Glycyl lysine isopeptide (Lys-Gly) (interchain with G-Cter in SUMO2) cross-links involve residues lysine 290 and lysine 294. Phosphoserine is present on residues serine 308 and serine 310. Lysine 374 is covalently cross-linked (Glycyl lysine isopeptide (Lys-Gly) (interchain with G-Cter in SUMO2)).

As to quaternary structure, interacts with SPIN1, SPIN2A, SPIN2B, SPIN3 and SPIN4. Interacts with TCF7L2 in a SPIN1-dependent manner. Interacts with PARP1; promoting PARP1 ADP-ribosyltransferase activity.

It localises to the nucleus. It is found in the chromosome. In terms of biological role, chromatin protein that stabilizes SPIN1 and enhances its association with histone H3 trimethylated at both 'Lys-4' and 'Lys-9' (H3K4me3K9me3). Positively regulates poly-ADP-ribosylation in response to DNA damage; acts by facilitating PARP1 ADP-ribosyltransferase activity. This is Spindlin interactor and repressor of chromatin-binding protein from Homo sapiens (Human).